The primary structure comprises 217 residues: Large ribosomal subunit protein uL1 (217 aa).

S2 carries the post-translational modification N-acetylserine. Y11 is modified (phosphotyrosine). Residues K91 and K106 each carry the N6-acetyllysine modification. K118 carries the post-translational modification N6-acetyllysine; alternate. A Glycyl lysine isopeptide (Lys-Gly) (interchain with G-Cter in SUMO1); alternate cross-link involves residue K118. A Glycyl lysine isopeptide (Lys-Gly) (interchain with G-Cter in SUMO2); alternate cross-link involves residue K118.

Belongs to the universal ribosomal protein uL1 family. In terms of assembly, component of the large ribosomal subunit.

Its subcellular location is the cytoplasm. Its function is as follows. Component of the large ribosomal subunit. The ribosome is a large ribonucleoprotein complex responsible for the synthesis of proteins in the cell. This is Large ribosomal subunit protein uL1 (RPL10A) from Macaca fascicularis (Crab-eating macaque).